A 232-amino-acid chain; its full sequence is LexA repressor (232 aa).

The segment at residues 26-46 (FDEMKDALDLRSKSGIHRLIT) is a DNA-binding region (H-T-H motif). Catalysis depends on for autocatalytic cleavage activity residues Ser153 and Lys191.

The protein belongs to the peptidase S24 family. As to quaternary structure, homodimer.

It carries out the reaction Hydrolysis of Ala-|-Gly bond in repressor LexA.. Its function is as follows. Represses a number of genes involved in the response to DNA damage (SOS response), including recA and lexA. In the presence of single-stranded DNA, RecA interacts with LexA causing an autocatalytic cleavage which disrupts the DNA-binding part of LexA, leading to derepression of the SOS regulon and eventually DNA repair. This chain is LexA repressor, found in Afipia carboxidovorans (strain ATCC 49405 / DSM 1227 / KCTC 32145 / OM5) (Oligotropha carboxidovorans).